The primary structure comprises 242 residues: UPF0173 metal-dependent hydrolase APE_1117 (242 aa).

This sequence belongs to the UPF0173 family.

In Aeropyrum pernix (strain ATCC 700893 / DSM 11879 / JCM 9820 / NBRC 100138 / K1), this protein is UPF0173 metal-dependent hydrolase APE_1117.